A 395-amino-acid chain; its full sequence is Xylose isomerase (395 aa).

Active-site residues include histidine 54 and glutamate 57. The segment at 80 to 108 (AVPAGAGRDRHEGADGDDEPVHAPGCSRD) is disordered. Positions 189, 225, 228, 253, 263, 265, and 295 each coordinate Mg(2+).

This sequence belongs to the xylose isomerase family. Homotetramer. Mg(2+) serves as cofactor.

The protein resides in the cytoplasm. It carries out the reaction alpha-D-xylose = alpha-D-xylulofuranose. This Streptomyces lividans protein is Xylose isomerase.